The chain runs to 222 residues: C-reactive protein (222 aa).

Positions 1–19 (MEKLSLCLLVIISLSNAFA) are cleaved as a signal peptide. Residue Q20 is modified to Pyrrolidone carboxylic acid. A Pentraxin (PTX) domain is found at 24-222 (IGKAFVFPKE…EVYVKPQLWP (199 aa)). A disulfide bridge links C55 with C113. N78, E154, Q155, D156, and Q166 together coordinate Ca(2+).

The protein belongs to the pentraxin family. In terms of assembly, homopentamer. Pentraxin (or pentaxin) have a discoid arrangement of 5 non-covalently bound subunits. Interacts with FCN1; may regulate monocyte activation by FCN1. It depends on Ca(2+) as a cofactor. Found in plasma.

Its subcellular location is the secreted. Its function is as follows. Displays several functions associated with host defense: it promotes agglutination, bacterial capsular swelling, phagocytosis and complement fixation through its calcium-dependent binding to phosphorylcholine. Can interact with DNA and histones and may scavenge nuclear material released from damaged circulating cells. The chain is C-reactive protein (CRP) from Sus scrofa (Pig).